Consider the following 139-residue polypeptide: Acidic phospholipase A2 H1E6 (139 aa).

The first 16 residues, 1 to 16, serve as a signal peptide directing secretion; it reads MRTLWILAVLQVGVEG. Disulfide bonds link cysteine 42-cysteine 132, cysteine 44-cysteine 60, cysteine 59-cysteine 111, cysteine 65-cysteine 139, cysteine 66-cysteine 104, cysteine 73-cysteine 97, and cysteine 91-cysteine 102. 3 residues coordinate Ca(2+): tyrosine 43, glycine 45, and glycine 47. The active site involves histidine 63. Residue aspartate 64 coordinates Ca(2+). Aspartate 105 is a catalytic residue.

Homodimer. The cofactor is Ca(2+). Expressed by the venom gland.

The protein resides in the secreted. The enzyme catalyses a 1,2-diacyl-sn-glycero-3-phosphocholine + H2O = a 1-acyl-sn-glycero-3-phosphocholine + a fatty acid + H(+). Snake venom phospholipase A2 (PLA2) that inhibits ADP-induced platelet aggregation. PLA2 catalyzes the calcium-dependent hydrolysis of the 2-acyl groups in 3-sn-phosphoglycerides. The protein is Acidic phospholipase A2 H1E6 of Calloselasma rhodostoma (Malayan pit viper).